Reading from the N-terminus, the 690-residue chain is Calpain-9 (690 aa).

A disordered region spans residues 1–24; the sequence is MPYLYRAPGPQAHPVPKDARITHS. The region spanning 42 to 337 is the Calpain catalytic domain; sequence LFEDADFPAS…FDKVEICNLT (296 aa). Residues Leu81, Gly83, and Asp88 each coordinate Ca(2+). Cys97 is an active-site residue. Glu167 serves as a coordination point for Ca(2+). Catalysis depends on residues His254 and Asn278. Ca(2+) is bound by residues Glu284, Asp291, Leu312, Asp314, and Glu316. Residues 338–521 are domain III; that stretch reads PDALEEDAIH…PPDQETEEEQ (184 aa). The tract at residues 498 to 519 is disordered; that stretch reads GNVDIDLPEPPKPTPPDQETEE. EF-hand domains are found at residues 518–552, 561–589, and 591–626; these read EEEQ…VLQK, LSLI…FKVF, and DKLK…AGFQ. The domain IV stretch occupies residues 522–690; sequence RFRALFEQVA…NEFIHLTMNI (169 aa). Ca(2+)-binding residues include Asp574, Ser576, Asn578, Lys580, Glu585, Asp604, Asp606, Ser608, Thr610, and Glu615.

Belongs to the peptidase C2 family. Expressed predominantly in stomach.

Its function is as follows. Calcium-regulated non-lysosomal thiol-protease. This is Calpain-9 (CAPN9) from Homo sapiens (Human).